A 265-amino-acid polypeptide reads, in one-letter code: Hydroxyacylglutathione hydrolase (265 aa).

7 residues coordinate Zn(2+): H53, H55, D57, H58, H109, D126, and H164.

Belongs to the metallo-beta-lactamase superfamily. Glyoxalase II family. In terms of assembly, monomer. The cofactor is Zn(2+).

It catalyses the reaction an S-(2-hydroxyacyl)glutathione + H2O = a 2-hydroxy carboxylate + glutathione + H(+). Its pathway is secondary metabolite metabolism; methylglyoxal degradation; (R)-lactate from methylglyoxal: step 2/2. In terms of biological role, thiolesterase that catalyzes the hydrolysis of S-D-lactoyl-glutathione to form glutathione and D-lactic acid. The chain is Hydroxyacylglutathione hydrolase from Dechloromonas aromatica (strain RCB).